The chain runs to 375 residues: Alcohol dehydrogenase 3, mitochondrial (375 aa).

The N-terminal 24 residues, 1-24, are a transit peptide targeting the mitochondrion; that stretch reads MLRTSTLFTRRVQPSLFSRNILRL. Cysteine 71 is a binding site for Zn(2+). The NAD(+) site is built by histidine 72, threonine 73, and histidine 76. 7 residues coordinate Zn(2+): histidine 94, glutamate 95, cysteine 125, cysteine 128, cysteine 131, cysteine 139, and cysteine 181. NAD(+)-binding residues include glycine 208, glycine 209, leucine 210, aspartate 229, lysine 234, phenylalanine 249, valine 296, serine 321, valine 323, and arginine 368.

Belongs to the zinc-containing alcohol dehydrogenase family. As to quaternary structure, homotetramer. Zn(2+) serves as cofactor.

It localises to the mitochondrion matrix. It is found in the mitochondrion inner membrane. The enzyme catalyses a primary alcohol + NAD(+) = an aldehyde + NADH + H(+). It catalyses the reaction a secondary alcohol + NAD(+) = a ketone + NADH + H(+). The catalysed reaction is ethanol + NAD(+) = acetaldehyde + NADH + H(+). It carries out the reaction butan-1-ol + NAD(+) = butanal + NADH + H(+). The enzyme catalyses hexan-1-ol + NAD(+) = hexanal + NADH + H(+). Mitochondrial isozyme that reduces acetaldehyde to ethanol during the fermentation of glucose. Involved in the shuttling of mitochondrial reducing equivalents to the cytosol, where the redox balance is restored by NADH dehydrogenases on the external side of the mitochondrial inner membrane. Shows a high affinity for alcohols with a double bond conjugated to the alcohol group. The protein is Alcohol dehydrogenase 3, mitochondrial (ADH3) of Saccharomyces cerevisiae (strain ATCC 204508 / S288c) (Baker's yeast).